Reading from the N-terminus, the 398-residue chain is Phosphoglycerate kinase (398 aa).

Residues aspartate 21 to asparagine 23, arginine 36, histidine 59 to arginine 62, arginine 119, and arginine 157 each bind substrate. Residues lysine 208, glycine 296, glutamate 327, and glycine 354–serine 357 contribute to the ATP site.

It belongs to the phosphoglycerate kinase family. As to quaternary structure, monomer.

Its subcellular location is the cytoplasm. It catalyses the reaction (2R)-3-phosphoglycerate + ATP = (2R)-3-phospho-glyceroyl phosphate + ADP. The protein operates within carbohydrate degradation; glycolysis; pyruvate from D-glyceraldehyde 3-phosphate: step 2/5. This chain is Phosphoglycerate kinase, found in Streptococcus pneumoniae serotype 2 (strain D39 / NCTC 7466).